Consider the following 157-residue polypeptide: UPF0756 membrane protein ABC2716 (157 aa).

The next 4 helical transmembrane spans lie at 8–28 (FLLL…IIAI), 54–74 (LGVT…DIGF), 84–104 (LYAW…ASGI), and 117–137 (LVLG…GPLI).

Belongs to the UPF0756 family.

The protein localises to the cell membrane. In Shouchella clausii (strain KSM-K16) (Alkalihalobacillus clausii), this protein is UPF0756 membrane protein ABC2716.